A 499-amino-acid polypeptide reads, in one-letter code: MMVAWWSLFLYGLQVAAPALAATPADWRSQSIYFLLTDRFARTDGSTTATCNTADQKYCGGTWQGIIDKLDYIQGMGFTAIWITPVTAQLPQTTAYGDAYHGYWQQDIYSLNENYGTADDLKALSSALHERGMYLMVDVVANHMGYDGAGSSVDYSVFKPFSSQDYFHPFCFIQNYEDQTQVEDCWLGDNTVSLPDLDTTKDVVKNEWYDWVGSLVSNYSIDGLRIDTVKHVQKDFWPGYNKAAGVYCIGEVLDGDPAYTCPYQNVMDGVLNYPIYYPLLNAFKSTSGSMDDLYNMINTVKSDCPDSTLLGTFVENHDNPRFASYTNDIALAKNVAAFIILNDGIPIIYAGQEQHYAGGNDPANREATWLSGYPTDSELYKLIASANAIRNYAISKDTGFVTYKNWPIYKDDTTIAMRKGTDGSQIVTILSNKGASGDSYTLSLSGAGYTAGQQLTEVIGCTTVTVGSDGNVPVPMAGGLPRVLYPTEKLAGSKICSSS.

A signal peptide spans 1 to 21 (MMVAWWSLFLYGLQVAAPALA). A disulfide bridge links cysteine 51 with cysteine 59. Positions 56 and 104 each coordinate substrate. Position 142 (asparagine 142) interacts with Ca(2+). Histidine 143 is a substrate binding site. A disulfide bond links cysteine 171 and cysteine 185. Ca(2+)-binding residues include glutamate 183 and aspartate 196. An N-linked (GlcNAc...) asparagine glycan is attached at asparagine 218. Arginine 225 is a substrate binding site. Ca(2+) contacts are provided by aspartate 227, histidine 231, and glutamate 251. Aspartate 227 functions as the Nucleophile in the catalytic mechanism. 230-231 (KH) serves as a coordination point for substrate. The active-site Proton donor is the glutamate 251. Glycine 255 contacts substrate. An intrachain disulfide couples cysteine 261 to cysteine 304. Residues aspartate 318 and arginine 365 each coordinate substrate. A disulfide bridge links cysteine 461 with cysteine 496.

This sequence belongs to the glycosyl hydrolase 13 family. In terms of assembly, monomer. Ca(2+) serves as cofactor.

Its subcellular location is the secreted. The catalysed reaction is Endohydrolysis of (1-&gt;4)-alpha-D-glucosidic linkages in polysaccharides containing three or more (1-&gt;4)-alpha-linked D-glucose units.. This chain is Alpha-amylase A type-1/2 (amy1), found in Aspergillus oryzae (strain ATCC 42149 / RIB 40) (Yellow koji mold).